Here is a 114-residue protein sequence, read N- to C-terminus: Large ribosomal subunit protein bL19 (114 aa).

This sequence belongs to the bacterial ribosomal protein bL19 family.

In terms of biological role, this protein is located at the 30S-50S ribosomal subunit interface and may play a role in the structure and function of the aminoacyl-tRNA binding site. The sequence is that of Large ribosomal subunit protein bL19 from Clostridium botulinum (strain Loch Maree / Type A3).